A 662-amino-acid chain; its full sequence is Serine/threonine kinase-like domain-containing protein STKLD1 (662 aa).

The region spanning 1-202 is the Protein kinase domain; it reads MLNPGALGVN…ILDMATCSFL (202 aa). Residues 2–10 and K25 each bind ATP; that span reads LNPGALGVN. The disordered stretch occupies residues 639–662; that stretch reads LQEDQLEPPAGQEAPLQGEPLFRP.

Belongs to the protein kinase superfamily. Ser/Thr protein kinase family. STKL subfamily.

The chain is Serine/threonine kinase-like domain-containing protein STKLD1 (Stkld1) from Mus musculus (Mouse).